A 111-amino-acid polypeptide reads, in one-letter code: Magnetosome protein MamF (111 aa).

Topologically, residues M1 to R17 are cytoplasmic. The helical transmembrane segment at S18–S38 threads the bilayer. Topologically, residues R39 to Q50 are lumenal. The helical transmembrane segment at G51 to G71 threads the bilayer. A topological domain (cytoplasmic) is located at residue K72. The helical transmembrane segment at W73–V93 threads the bilayer. Residues A94–I111 lie on the Lumenal side of the membrane.

It belongs to the magnetosome MamF/MmsF protein family. In terms of assembly, may form homooligomers. Subject to cleavage or degradation; identified by N-terminal sequencing of proteins that are about 103, 92 and 15 kDa in size.

The protein resides in the magnetosome membrane. In terms of biological role, plays a role in regulating magnetite crystal size; partially redundant function with MmsF. The sequence is that of Magnetosome protein MamF from Magnetospirillum gryphiswaldense (strain DSM 6361 / JCM 21280 / NBRC 15271 / MSR-1).